Consider the following 805-residue polypeptide: N-(5-amino-5-carboxypentanoyl)-L-cysteinyl-D-valine synthase (805 aa).

The segment at 783–805 (PDTGGGAVGSTTTGGVRGELREI) is disordered.

It belongs to the ATP-dependent AMP-binding enzyme family. Pantetheine 4'-phosphate serves as cofactor.

The enzyme catalyses L-2-aminoadipate + L-valine + L-cysteine + 3 ATP + H2O = N-[(5S)-5-amino-5-carboxypentanoyl]-L-cysteinyl-D-valine + 3 AMP + 3 diphosphate + 3 H(+). Its pathway is antibiotic biosynthesis; penicillin G biosynthesis; penicillin G from L-alpha-aminoadipate and L-cysteine and L-valine: step 1/3. Functionally, each of the constituent amino acids of ACV are activated as aminoacyl-adenylates with peptide bonds formed through the participation of amino acid thioester intermediates. The polypeptide is N-(5-amino-5-carboxypentanoyl)-L-cysteinyl-D-valine synthase (pcbAB) (Streptomyces clavuligerus).